The sequence spans 112 residues: SRA stem-loop-interacting RNA-binding protein, mitochondrial (112 aa).

At Ser-15 the chain carries Phosphoserine. The region spanning 19-98 (PIAFVRKIPW…IHVQAQRAKA (80 aa)) is the RRM domain. Position 104 is a phosphothreonine (Thr-104). Phosphoserine is present on Ser-105.

Its subcellular location is the mitochondrion. It is found in the nucleus. Its function is as follows. RNA-binding protein that acts as a nuclear receptor corepressor. Probably acts by binding the SRA RNA, and repressing the SRA-mediated nuclear receptor coactivation. Binds the STR7 loop of SRA RNA. Also able to repress glucocorticoid (GR), androgen (AR), thyroid (TR) and VDR-mediated transactivation. This is SRA stem-loop-interacting RNA-binding protein, mitochondrial (Slirp) from Mus musculus (Mouse).